The primary structure comprises 219 residues: MAIFSVYVVNKAGGLIYQLDSYAPRAEAEKTFSYPLDLLLKLHDERVLVAFGQRDGIRVGHAVLAINGVDVNGKYTADGKEVLEYLGNPANYPVSIRFGRPRLTSNEKLMLASMFHSLFAIGSQLSPEQGSSGIEMLETDTFKLHCFQTLTGIKFVVLADPRQAGIDSLLRKIYEIYSDFALKNPFYSLEMPIRCELFDQNLKLALEVAEKAGTFGPGS.

This sequence belongs to the TRAPP small subunits family. TRAPPC4 subfamily. In terms of assembly, component of the multisubunit TRAPP (transport protein particle) complex, which includes at least TRAPPC2, TRAPPC2L, TRAPPC3, TRAPPC3L, TRAPPC4, TRAPPC5, TRAPPC8, TRAPPC9, TRAPPC10, TRAPPC11 and TRAPPC12. Interacts with SDC2.

The protein localises to the postsynaptic cell membrane. It is found in the golgi apparatus membrane. Its subcellular location is the endoplasmic reticulum. It localises to the vesicle. In terms of biological role, core component of the TRAPP complexes which has a function of guanine nucleotide exchange factor activity for Rab1 GTPase. Plays a role in vesicular transport from endoplasmic reticulum to Golgi and autophagy. May play a role in dendrite postsynaptic membrane trafficking. The chain is Trafficking protein particle complex subunit 4 (TRAPPC4) from Bos taurus (Bovine).